The following is a 737-amino-acid chain: ATP-dependent RNA helicase DDX50 (737 aa).

Positions 1–131 (MPGKLLWGDI…SDNKLEETLT (131 aa)) are disordered. Residues 11 to 20 (MELEAPLEES) are compositionally biased toward acidic residues. Basic and acidic residues-rich tracts occupy residues 38-51 (HYDS…RENG), 67-87 (KEKL…EFSK), and 117-131 (STHK…ETLT). 5 positions are modified to phosphoserine: Ser41, Ser82, Ser86, Ser121, and Ser122. A Glycyl lysine isopeptide (Lys-Gly) (interchain with G-Cter in SUMO2) cross-link involves residue Lys125. The Q motif motif lies at 137-165 (GAFSNFPISEETIKLLKGRGVTYLFPIQV). The Helicase ATP-binding domain maps to 168-347 (FGPVYEGKDL…KKYMKSRYEQ (180 aa)). Position 181-188 (181-188 (ARTGTGKT)) interacts with ATP. Thr247 is subject to Phosphothreonine. A DEVD box motif is present at residues 290–293 (DEVD). The 145-residue stretch at 380-524 (DVLQVYSGSE…GVPSTMDLVK (145 aa)) folds into the Helicase C-terminal domain. Residue Ser518 is modified to Phosphoserine. Positions 668-737 (YDGNTSSNSR…RSGGHKRSFD (70 aa)) are disordered. Residues 673 to 687 (SSNSRQRSGWSSGRS) are compositionally biased toward low complexity. The span at 691-701 (GRSGGRSGGRS) shows a compositional bias: gly residues. The span at 702–712 (GRQSRQGSRSG) shows a compositional bias: low complexity. The segment covering 720-737 (RSGNRNRSRSGGHKRSFD) has biased composition (basic residues).

Belongs to the DEAD box helicase family. DDX21/DDX50 subfamily. As to quaternary structure, interacts with C1QBP. Interacts with the ubiquitin ligase CTLH complex through GID4. Interacts with TICAM1. As to expression, highest expression in skeletal muscle, liver, heart, placenta, and kidney.

The protein resides in the nucleus. It localises to the nucleolus. The protein localises to the cytoplasm. The catalysed reaction is ATP + H2O = ADP + phosphate + H(+). Functionally, ATP-dependent RNA helicase that may play a role in various aspects of RNA metabolism including pre-mRNA splicing or ribosomal RNA production. Also acts as a viral restriction factor and promotes the activation of the NF-kappa-B and IRF3 signaling pathways following its stimulation with viral RNA or infection with RNA and DNA viruses. For instance, decreases vaccinia virus, herpes simplex virus, Zika virus or dengue virus replication during the early stage of infection. Mechanistically, acts via the adapter TICAM1 and independently of the DDX1-DDX21-DHX36 helicase complex to induce the production of interferon-beta. The sequence is that of ATP-dependent RNA helicase DDX50 (DDX50) from Homo sapiens (Human).